Here is a 281-residue protein sequence, read N- to C-terminus: Lectin CaBo (281 aa).

A signal peptide spans Met-1–Ser-29. Ca(2+) is bound at residue Asp-119. Arg-139 contacts a carbohydrate. Positions Ile-149–Asn-163 are cleaved as a propeptide — removed in mature form. Residues Glu-171 and Asp-173 each contribute to the Mn(2+) site. The Ca(2+) site is built by Asp-173, Tyr-175, Asn-177, and Asp-182. Tyr-175 lines the a carbohydrate pocket. Residues Asp-182 and His-187 each coordinate Mn(2+). Position 262–263 (Leu-262–Tyr-263) interacts with a carbohydrate.

Belongs to the leguminous lectin family. Equilibrium between homodimer and homotetramer. In terms of processing, the mature chain consists of residues 164-281 followed by residues 30-148. Concanavalin A-like lectins of the Diocleinae subtribe undergo proteolytic processing referred to as circular permutation. The propeptide is split into an N-terminal and a C-terminal part, the gamma and beta chain, respectively. These are then religated in beta-gamma order to form the mature alpha chain. The beta and gamma chains can often be detected in cell extracts.

Its function is as follows. D-mannose-specific lectin. This is Lectin CaBo from Canavalia bonariensis.